A 383-amino-acid polypeptide reads, in one-letter code: Acetylornithine deacetylase (383 aa).

H80 contributes to the Zn(2+) binding site. D82 is an active-site residue. Position 112 (D112) interacts with Zn(2+). E144 is a catalytic residue. Positions 145, 169, and 355 each coordinate Zn(2+).

It belongs to the peptidase M20A family. ArgE subfamily. In terms of assembly, homodimer. Requires Zn(2+) as cofactor. It depends on Co(2+) as a cofactor. The cofactor is glutathione.

The protein localises to the cytoplasm. The enzyme catalyses N(2)-acetyl-L-ornithine + H2O = L-ornithine + acetate. Its pathway is amino-acid biosynthesis; L-arginine biosynthesis; L-ornithine from N(2)-acetyl-L-ornithine (linear): step 1/1. Catalyzes the hydrolysis of the amide bond of N(2)-acetylated L-amino acids. Cleaves the acetyl group from N-acetyl-L-ornithine to form L-ornithine, an intermediate in L-arginine biosynthesis pathway, and a branchpoint in the synthesis of polyamines. This Edwardsiella ictaluri (strain 93-146) protein is Acetylornithine deacetylase.